A 266-amino-acid polypeptide reads, in one-letter code: Hydroxyethylthiazole kinase (266 aa).

M43 is a substrate binding site. The ATP site is built by R119 and T166. G193 lines the substrate pocket.

It belongs to the Thz kinase family. Mg(2+) is required as a cofactor.

It catalyses the reaction 5-(2-hydroxyethyl)-4-methylthiazole + ATP = 4-methyl-5-(2-phosphooxyethyl)-thiazole + ADP + H(+). It functions in the pathway cofactor biosynthesis; thiamine diphosphate biosynthesis; 4-methyl-5-(2-phosphoethyl)-thiazole from 5-(2-hydroxyethyl)-4-methylthiazole: step 1/1. In terms of biological role, catalyzes the phosphorylation of the hydroxyl group of 4-methyl-5-beta-hydroxyethylthiazole (THZ). In Methanococcus maripaludis (strain DSM 14266 / JCM 13030 / NBRC 101832 / S2 / LL), this protein is Hydroxyethylthiazole kinase.